Reading from the N-terminus, the 565-residue chain is NAD-dependent malic enzyme (565 aa).

Catalysis depends on Tyr-104, which acts as the Proton donor. Residue Arg-157 participates in NAD(+) binding. The active-site Proton acceptor is the Lys-175. Residues Glu-246, Asp-247, and Asp-270 each contribute to the a divalent metal cation site. Residues Asp-270 and Asn-418 each coordinate NAD(+).

This sequence belongs to the malic enzymes family. Homotetramer. Mg(2+) serves as cofactor. Requires Mn(2+) as cofactor.

The catalysed reaction is (S)-malate + NAD(+) = pyruvate + CO2 + NADH. It catalyses the reaction oxaloacetate + H(+) = pyruvate + CO2. The sequence is that of NAD-dependent malic enzyme from Edwardsiella ictaluri (strain 93-146).